The following is a 509-amino-acid chain: Cytochrome P450 98A2 (509 aa).

A helical transmembrane segment spans residues 2–21 (ALLLIIPISLVTLWLGYTLY). Residue C439 coordinates heme.

It belongs to the cytochrome P450 family. Heme serves as cofactor.

It localises to the membrane. The protein is Cytochrome P450 98A2 (CYP98A2) of Glycine max (Soybean).